A 278-amino-acid polypeptide reads, in one-letter code: Large ribosomal subunit protein uL2 (278 aa).

Basic residues-rich tracts occupy residues 210 to 219 (RSRWLGKRPQ) and 252 to 263 (KKSRGIKTRNSK). Positions 210–278 (RSRWLGKRPQ…LIIRHRKGNK (69 aa)) are disordered.

This sequence belongs to the universal ribosomal protein uL2 family. As to quaternary structure, part of the 50S ribosomal subunit. Forms a bridge to the 30S subunit in the 70S ribosome.

One of the primary rRNA binding proteins. Required for association of the 30S and 50S subunits to form the 70S ribosome, for tRNA binding and peptide bond formation. It has been suggested to have peptidyltransferase activity; this is somewhat controversial. Makes several contacts with the 16S rRNA in the 70S ribosome. This chain is Large ribosomal subunit protein uL2, found in Lactobacillus johnsonii (strain CNCM I-12250 / La1 / NCC 533).